We begin with the raw amino-acid sequence, 258 residues long: Acetylglutamate kinase (258 aa).

Residues 41–42 (GG), arginine 63, and asparagine 156 contribute to the substrate site.

Belongs to the acetylglutamate kinase family. ArgB subfamily. Homodimer.

Its subcellular location is the cytoplasm. The catalysed reaction is N-acetyl-L-glutamate + ATP = N-acetyl-L-glutamyl 5-phosphate + ADP. It functions in the pathway amino-acid biosynthesis; L-arginine biosynthesis; N(2)-acetyl-L-ornithine from L-glutamate: step 2/4. Catalyzes the ATP-dependent phosphorylation of N-acetyl-L-glutamate. In Geobacillus stearothermophilus (Bacillus stearothermophilus), this protein is Acetylglutamate kinase.